Reading from the N-terminus, the 29-residue chain is U-homostoxin-Hdu1a (29 aa).

O-linked (GlcNAc...) threonine glycosylation is present at Thr1. 2 disulfides stabilise this stretch: Cys7–Cys19 and Cys10–Cys25.

The protein belongs to the sea anemone BBH family.

It localises to the secreted. The protein resides in the nematocyst. This is U-homostoxin-Hdu1a from Homostichanthus duerdeni (Sea anemone).